The following is a 538-amino-acid chain: Carboxypeptidase 2 (538 aa).

Residues 1-21 (MVAYRFLTLISLGLGSHCASA) form the signal peptide. The N-linked (GlcNAc...) asparagine glycan is linked to N46. Residues 53 to 76 (PAFTSPGTVPRGFSDGTSGPTRDE) are disordered. Positions 71–351 (GPTRDETMEG…VMVKSILQTA (281 aa)) constitute a Peptidase M14 domain. Zn(2+) contacts are provided by H136, E139, and H224. E322 serves as the catalytic Proton donor/acceptor. N393 and N459 each carry an N-linked (GlcNAc...) asparagine glycan.

It belongs to the peptidase M14 family. Requires Zn(2+) as cofactor.

The protein localises to the secreted. Functionally, extracellular metalloprotease that contributes to pathogenicity. In Trichophyton tonsurans (Scalp ringworm fungus), this protein is Carboxypeptidase 2 (MCPB).